The sequence spans 134 residues: ATP synthase epsilon chain (134 aa).

The protein belongs to the ATPase epsilon chain family. As to quaternary structure, F-type ATPases have 2 components, CF(1) - the catalytic core - and CF(0) - the membrane proton channel. CF(1) has five subunits: alpha(3), beta(3), gamma(1), delta(1), epsilon(1). CF(0) has three main subunits: a, b and c.

It localises to the cell membrane. Produces ATP from ADP in the presence of a proton gradient across the membrane. The polypeptide is ATP synthase epsilon chain (Ruminococcus albus (strain ATCC 27210 / DSM 20455 / JCM 14654 / NCDO 2250 / 7)).